A 483-amino-acid chain; its full sequence is Aspartyl/glutamyl-tRNA(Asn/Gln) amidotransferase subunit B (483 aa).

Belongs to the GatB/GatE family. GatB subfamily. As to quaternary structure, heterotrimer of A, B and C subunits.

It catalyses the reaction L-glutamyl-tRNA(Gln) + L-glutamine + ATP + H2O = L-glutaminyl-tRNA(Gln) + L-glutamate + ADP + phosphate + H(+). The enzyme catalyses L-aspartyl-tRNA(Asn) + L-glutamine + ATP + H2O = L-asparaginyl-tRNA(Asn) + L-glutamate + ADP + phosphate + 2 H(+). Functionally, allows the formation of correctly charged Asn-tRNA(Asn) or Gln-tRNA(Gln) through the transamidation of misacylated Asp-tRNA(Asn) or Glu-tRNA(Gln) in organisms which lack either or both of asparaginyl-tRNA or glutaminyl-tRNA synthetases. The reaction takes place in the presence of glutamine and ATP through an activated phospho-Asp-tRNA(Asn) or phospho-Glu-tRNA(Gln). The protein is Aspartyl/glutamyl-tRNA(Asn/Gln) amidotransferase subunit B of Roseiflexus castenholzii (strain DSM 13941 / HLO8).